Reading from the N-terminus, the 585-residue chain is MAGUK p55 subfamily member 3 (585 aa).

L27 domains are found at residues 6 to 60 (EDSG…ERQS) and 61 to 118 (PTPV…FDPV). The PDZ domain maps to 137–218 (IVRLVKNKEP…SITLKIIPAT (82 aa)). The SH3 domain maps to 226–296 (ESKVFMRALF…PSKQFQERRL (71 aa)). S307 is subject to Phosphoserine. Positions 385 to 570 (SRLVVLIGSL…VCSQLRAVIE (186 aa)) constitute a Guanylate kinase-like domain. Positions 510-530 (KRKTPPVSPDSEDPATPLDEQ) are disordered.

Belongs to the MAGUK family. Interacts with HTR2C; this interaction stabilizes the receptor at the plasma membrane and prevents the desensitization of the HTR2C receptor-mediated calcium response. Interacts with HTR2A. Interacts with HTR4. Interacts (via PDZ domain) with CADM1 (via C-terminus)Interacts (via PDZ domain) with CADM1; this interaction connects CADM1 with DLG1. Interacts (via Guanylate kinase-like domain) with PALS1. Interacts with DLG1 (via N-terminus); this interaction connects CADM1 with DLG1 and links CADM1 with the regulatory subunit of phosphoinositide-3-kinase (PI3K) by forming a multiprotein complex and participates in cell spreading.

The protein localises to the apical cell membrane. The protein resides in the cell membrane. Its subcellular location is the cell junction. It localises to the adherens junction. Functionally, participates in cell spreading through the phosphoinositide-3-kinase (PI3K) pathway by connecting CADM1 to DLG1 and the regulatory subunit of phosphoinositide-3-kinase (PI3K). Stabilizes HTR2C at the plasma membrane and prevents its desensitization. May participates in the maintenance of adherens junctions. This Rattus norvegicus (Rat) protein is MAGUK p55 subfamily member 3.